A 342-amino-acid chain; its full sequence is Palmitoyltransferase PFA4 (342 aa).

The Cytoplasmic portion of the chain corresponds to 1–8 (MITFSNPW). A helical transmembrane segment spans residues 9-29 (IGVIIPCIIIFTLSTFSAIYI). Residues 30–38 (LPHHVSNNE) lie on the Lumenal side of the membrane. The helical transmembrane segment at 39-59 (LTLFICASAMVWISYIIAIIV) threads the bilayer. Over 60 to 124 (PPGSPPKNYT…GHRNMPHFMR (65 aa)) the chain is Cytoplasmic. The DHHC domain maps to 77-127 (MYCLKCKAYKPERTHHSKALGVCVLKMDHHCPWTNNTVGHRNMPHFMRFLV). Cysteine 107 serves as the catalytic S-palmitoyl cysteine intermediate. A helical transmembrane segment spans residues 125–145 (FLVWVDMTVGYLFIRLCIRIM). Residues 146–162 (KLWRDKHLPSYLFDKTE) are Lumenal-facing. The chain crosses the membrane as a helical span at residues 163-183 (VILSIVFLPASFFVLFTVGIL). The Cytoplasmic segment spans residues 184 to 342 (TIRVFVNMCN…ADFGVEHTDI (159 aa)).

It belongs to the DHHC palmitoyltransferase family. PFA4 subfamily.

The protein resides in the endoplasmic reticulum membrane. It carries out the reaction L-cysteinyl-[protein] + hexadecanoyl-CoA = S-hexadecanoyl-L-cysteinyl-[protein] + CoA. Functionally, mediates the reversible addition of palmitate to target proteins, thereby regulating their membrane association and biological function. The polypeptide is Palmitoyltransferase PFA4 (Yarrowia lipolytica (strain CLIB 122 / E 150) (Yeast)).